The chain runs to 490 residues: Glutamate--tRNA ligase (490 aa).

A 'HIGH' region motif is present at residues 9–19 (PSPTGLQHIGG). A 'KMSKS' region motif is present at residues 251–255 (KLSKR). Residue lysine 254 participates in ATP binding.

Belongs to the class-I aminoacyl-tRNA synthetase family. Glutamate--tRNA ligase type 1 subfamily. In terms of assembly, monomer.

It is found in the cytoplasm. It catalyses the reaction tRNA(Glu) + L-glutamate + ATP = L-glutamyl-tRNA(Glu) + AMP + diphosphate. Its function is as follows. Catalyzes the attachment of glutamate to tRNA(Glu) in a two-step reaction: glutamate is first activated by ATP to form Glu-AMP and then transferred to the acceptor end of tRNA(Glu). The chain is Glutamate--tRNA ligase from Borreliella afzelii (strain PKo) (Borrelia afzelii).